The primary structure comprises 370 residues: 3 beta-hydroxysteroid dehydrogenase/Delta 5--&gt;4-isomerase (370 aa).

The Proton acceptor role is filled by Y158. K162 is an NAD(+) binding site.

Belongs to the 3-beta-HSD family. As to quaternary structure, monomer.

It localises to the cytoplasm. It catalyses the reaction a 3beta-hydroxy-Delta(5)-steroid + NAD(+) = a 3-oxo-Delta(5)-steroid + NADH + H(+). The enzyme catalyses cholesterol + NAD(+) = cholest-5-en-3-one + NADH + H(+). The catalysed reaction is pregnenolone + NAD(+) = pregn-5-ene-3,20-dione + NADH + H(+). It carries out the reaction 3beta-hydroxyandrost-5-en-17-one + NAD(+) = androst-5-ene-3,17-dione + NADH + H(+). It catalyses the reaction a 3-oxo-Delta(5)-steroid = a 3-oxo-Delta(4)-steroid. The enzyme catalyses cholest-5-en-3-one = cholest-4-en-3-one. The catalysed reaction is pregn-5-ene-3,20-dione = progesterone. It carries out the reaction androst-5-ene-3,17-dione = androst-4-ene-3,17-dione. It functions in the pathway lipid metabolism; steroid biosynthesis. 3-beta-HSD is a bifunctional enzyme, that catalyzes the oxidation and isomerization of cholesterol, pregnenolone, and dehydroepiandrosterone (DHEA) into cholest-4-en-3-one, progesterone, and androsterone, respectively. This Mycobacterium tuberculosis (strain CDC 1551 / Oshkosh) protein is 3 beta-hydroxysteroid dehydrogenase/Delta 5--&gt;4-isomerase.